The sequence spans 101 residues: Putative pterin-4-alpha-carbinolamine dehydratase (101 aa).

It belongs to the pterin-4-alpha-carbinolamine dehydratase family.

The enzyme catalyses (4aS,6R)-4a-hydroxy-L-erythro-5,6,7,8-tetrahydrobiopterin = (6R)-L-erythro-6,7-dihydrobiopterin + H2O. The chain is Putative pterin-4-alpha-carbinolamine dehydratase (phhB) from Ralstonia nicotianae (strain ATCC BAA-1114 / GMI1000) (Ralstonia solanacearum).